The primary structure comprises 548 residues: Transcriptional adapter ADA2a (548 aa).

Positions 1–30 (MGRSKLASRPAEEDLNPGKSKRKKISLGPE) are disordered. The ZZ-type zinc-finger motif lies at 48-104 (PGLYCCNYCDKDLSGLVRFKCAVCMDFDLCVECFSVGVELNRHKNSHPYRVMDNLSF). Zn(2+)-binding residues include cysteine 53, cysteine 56, cysteine 68, cysteine 71, cysteine 77, cysteine 80, histidine 90, and histidine 94. One can recognise an SANT domain in the interval 106–158 (LVTSDWNADEEILLLEAIATYGFGNWKEVADHVGSKTTTECIKHFNSAYMQSP). Lysine 257 carries the N6-acetyllysine; by GCN5 modification. A coiled-coil region spans residues 365 to 386 (QSKEEHKELIKKVIEEHQILRR). An SWIRM domain is found at 461–548 (PRIYSGLDTW…LVHKGIGDST (88 aa)).

In terms of assembly, interacts in vitro with the HAT domain of GCN5 and with the DNA-binding domain of the transcriptional activator DREB1B/CBF1. Acetylated in vitro by GCN5, but acetylation is not essential for biological activity. As to expression, expressed in roots and leaves.

Its subcellular location is the nucleus. Functionally, required for the function of some acidic activation domains, which activate transcription from a distant site. The exact mechanism of action is not yet known. ADA2 stimulates the acetyltransferase activity of GCN5 on free histones or nucleosomes, probably by opening up the promoter region. The sequence is that of Transcriptional adapter ADA2a (ADA2A) from Arabidopsis thaliana (Mouse-ear cress).